Here is a 240-residue protein sequence, read N- to C-terminus: DUP240 protein DFP1 (240 aa).

The disordered stretch occupies residues 1-29 (MQPYLKKNTHATDDPKASPLKEGSPDNPE). 2 consecutive transmembrane segments (helical) span residues 61 to 81 (IMIN…DIWF) and 84 to 104 (VLSP…VLQI).

It belongs to the DUP/COS family.

The protein resides in the membrane. This is DUP240 protein DFP1 from Saccharomyces cerevisiae (Baker's yeast).